The primary structure comprises 433 residues: Bifunctional protein GlmU (433 aa).

The tract at residues 1–226 (MLSVIILAAG…EECFLGVNSQ (226 aa)) is pyrophosphorylase. Residues 7–10 (LAAG), K21, and 80–81 (GT) each bind UDP-N-acetyl-alpha-D-glucosamine. D106 contributes to the Mg(2+) binding site. UDP-N-acetyl-alpha-D-glucosamine contacts are provided by G138, E152, N167, and N224. Residue N224 participates in Mg(2+) binding. Residues 227–247 (TERAKAEEIMLERLRKNAMDL) are linker. Residues 248–433 (GVVMQLPNSI…NGYFKFFKKP (186 aa)) form an N-acetyltransferase region. Residues R311 and K328 each coordinate UDP-N-acetyl-alpha-D-glucosamine. The Proton acceptor role is filled by H339. Positions 342 and 353 each coordinate UDP-N-acetyl-alpha-D-glucosamine. Acetyl-CoA contacts are provided by residues A356, 362-363 (NY), S381, S399, and R416.

It in the N-terminal section; belongs to the N-acetylglucosamine-1-phosphate uridyltransferase family. This sequence in the C-terminal section; belongs to the transferase hexapeptide repeat family. Homotrimer. Mg(2+) serves as cofactor.

Its subcellular location is the cytoplasm. It carries out the reaction alpha-D-glucosamine 1-phosphate + acetyl-CoA = N-acetyl-alpha-D-glucosamine 1-phosphate + CoA + H(+). It catalyses the reaction N-acetyl-alpha-D-glucosamine 1-phosphate + UTP + H(+) = UDP-N-acetyl-alpha-D-glucosamine + diphosphate. It participates in nucleotide-sugar biosynthesis; UDP-N-acetyl-alpha-D-glucosamine biosynthesis; N-acetyl-alpha-D-glucosamine 1-phosphate from alpha-D-glucosamine 6-phosphate (route II): step 2/2. Its pathway is nucleotide-sugar biosynthesis; UDP-N-acetyl-alpha-D-glucosamine biosynthesis; UDP-N-acetyl-alpha-D-glucosamine from N-acetyl-alpha-D-glucosamine 1-phosphate: step 1/1. It functions in the pathway bacterial outer membrane biogenesis; LPS lipid A biosynthesis. Catalyzes the last two sequential reactions in the de novo biosynthetic pathway for UDP-N-acetylglucosamine (UDP-GlcNAc). The C-terminal domain catalyzes the transfer of acetyl group from acetyl coenzyme A to glucosamine-1-phosphate (GlcN-1-P) to produce N-acetylglucosamine-1-phosphate (GlcNAc-1-P), which is converted into UDP-GlcNAc by the transfer of uridine 5-monophosphate (from uridine 5-triphosphate), a reaction catalyzed by the N-terminal domain. The protein is Bifunctional protein GlmU of Helicobacter pylori (strain ATCC 700392 / 26695) (Campylobacter pylori).